Consider the following 231-residue polypeptide: ATP phosphoribosyltransferase (231 aa).

This sequence belongs to the ATP phosphoribosyltransferase family. Short subfamily. Heteromultimer composed of HisG and HisZ subunits.

It localises to the cytoplasm. It catalyses the reaction 1-(5-phospho-beta-D-ribosyl)-ATP + diphosphate = 5-phospho-alpha-D-ribose 1-diphosphate + ATP. It functions in the pathway amino-acid biosynthesis; L-histidine biosynthesis; L-histidine from 5-phospho-alpha-D-ribose 1-diphosphate: step 1/9. Functionally, catalyzes the condensation of ATP and 5-phosphoribose 1-diphosphate to form N'-(5'-phosphoribosyl)-ATP (PR-ATP). Has a crucial role in the pathway because the rate of histidine biosynthesis seems to be controlled primarily by regulation of HisG enzymatic activity. This chain is ATP phosphoribosyltransferase, found in Brucella anthropi (strain ATCC 49188 / DSM 6882 / CCUG 24695 / JCM 21032 / LMG 3331 / NBRC 15819 / NCTC 12168 / Alc 37) (Ochrobactrum anthropi).